A 289-amino-acid chain; its full sequence is GTPase Era (289 aa).

Residues 2–167 enclose the Era-type G domain; it reads KSGFISLIGR…LDEIYKYLPE (166 aa). The interval 10–17 is G1; it reads GRTNAGKS. GTP is bound at residue 10 to 17; that stretch reads GRTNAGKS. The interval 36 to 40 is G2; it reads NATRR. The segment at 57 to 60 is G3; the sequence is DTPG. GTP contacts are provided by residues 57–61 and 116–119; these read DTPGL and TKID. The segment at 116–119 is G4; it reads TKID. Residues 146–148 form a G5 region; sequence LSV. The KH type-2 domain occupies 198–274; that stretch reads VSDEVPYSTD…FLKINVKIDK (77 aa).

Belongs to the TRAFAC class TrmE-Era-EngA-EngB-Septin-like GTPase superfamily. Era GTPase family. In terms of assembly, monomer.

It localises to the cytoplasm. Its subcellular location is the cell inner membrane. In terms of biological role, an essential GTPase that binds both GDP and GTP, with rapid nucleotide exchange. Plays a role in 16S rRNA processing and 30S ribosomal subunit biogenesis and possibly also in cell cycle regulation and energy metabolism. This Campylobacter fetus subsp. fetus (strain 82-40) protein is GTPase Era.